Here is a 209-residue protein sequence, read N- to C-terminus: MRSRTSLLEQAALDWHPPGLVAGVDEAGRGPLAGPVVAAAVILDDLQPIAGLADSKVLTAARREKLYDEIRAKALCCSIAEASVEEIDQHNILQATMLAMRRAVLGLRLKPVRVLVDGNRLPPLDVPAEAIVKGDALVASISAASILAKVTRDRWCAQLHQQYPVYGFAGHKGYGTAEHLAALEVHGACPQHRRSFAPVARALQAPVAA.

Positions 19–208 (GLVAGVDEAG…VARALQAPVA (190 aa)) constitute an RNase H type-2 domain. Positions 25, 26, and 117 each coordinate a divalent metal cation.

It belongs to the RNase HII family. Requires Mn(2+) as cofactor. It depends on Mg(2+) as a cofactor.

It localises to the cytoplasm. The catalysed reaction is Endonucleolytic cleavage to 5'-phosphomonoester.. Its function is as follows. Endonuclease that specifically degrades the RNA of RNA-DNA hybrids. This Acidovorax ebreus (strain TPSY) (Diaphorobacter sp. (strain TPSY)) protein is Ribonuclease HII.